We begin with the raw amino-acid sequence, 158 residues long: Regulator of sigma D (158 aa).

Belongs to the Rsd/AlgQ family. Interacts with RpoD.

It is found in the cytoplasm. In terms of biological role, binds RpoD and negatively regulates RpoD-mediated transcription activation by preventing the interaction between the primary sigma factor RpoD with the catalytic core of the RNA polymerase and with promoter DNA. May be involved in replacement of the RNA polymerase sigma subunit from RpoD to RpoS during the transition from exponential growth to the stationary phase. The protein is Regulator of sigma D of Escherichia fergusonii (strain ATCC 35469 / DSM 13698 / CCUG 18766 / IAM 14443 / JCM 21226 / LMG 7866 / NBRC 102419 / NCTC 12128 / CDC 0568-73).